Reading from the N-terminus, the 308-residue chain is Mycothiol acetyltransferase (308 aa).

Position 44 (glutamate 44) interacts with 1D-myo-inositol 2-(L-cysteinylamino)-2-deoxy-alpha-D-glucopyranoside. Position 83-85 (alanine 83–valine 85) interacts with acetyl-CoA. Residues valine 161 to aspartate 308 form the N-acetyltransferase domain. Glutamate 188, lysine 230, and glutamate 238 together coordinate 1D-myo-inositol 2-(L-cysteinylamino)-2-deoxy-alpha-D-glucopyranoside. Acetyl-CoA is bound by residues valine 242–valine 244 and glutamine 249–arginine 255. Tyrosine 276 contacts 1D-myo-inositol 2-(L-cysteinylamino)-2-deoxy-alpha-D-glucopyranoside. Position 281 to 286 (asparagine 281 to histidine 286) interacts with acetyl-CoA.

The protein belongs to the acetyltransferase family. MshD subfamily. In terms of assembly, monomer.

The enzyme catalyses 1D-myo-inositol 2-(L-cysteinylamino)-2-deoxy-alpha-D-glucopyranoside + acetyl-CoA = mycothiol + CoA + H(+). Functionally, catalyzes the transfer of acetyl from acetyl-CoA to desacetylmycothiol (Cys-GlcN-Ins) to form mycothiol. This is Mycothiol acetyltransferase from Gordonia bronchialis (strain ATCC 25592 / DSM 43247 / BCRC 13721 / JCM 3198 / KCTC 3076 / NBRC 16047 / NCTC 10667) (Rhodococcus bronchialis).